The chain runs to 233 residues: RNA-free ribonuclease P (233 aa).

The protein belongs to the HARP family.

The catalysed reaction is Endonucleolytic cleavage of RNA, removing 5'-extranucleotides from tRNA precursor.. RNA-free RNase P that catalyzes the removal of the 5'-leader sequence from pre-tRNA to produce the mature 5'-terminus. In Methanocaldococcus jannaschii (strain ATCC 43067 / DSM 2661 / JAL-1 / JCM 10045 / NBRC 100440) (Methanococcus jannaschii), this protein is RNA-free ribonuclease P.